We begin with the raw amino-acid sequence, 273 residues long: Ribosomal RNA small subunit methyltransferase A (273 aa).

Asn-18, Leu-20, Gly-45, Glu-66, Asp-91, and Asn-113 together coordinate S-adenosyl-L-methionine.

The protein belongs to the class I-like SAM-binding methyltransferase superfamily. rRNA adenine N(6)-methyltransferase family. RsmA subfamily.

The protein localises to the cytoplasm. It catalyses the reaction adenosine(1518)/adenosine(1519) in 16S rRNA + 4 S-adenosyl-L-methionine = N(6)-dimethyladenosine(1518)/N(6)-dimethyladenosine(1519) in 16S rRNA + 4 S-adenosyl-L-homocysteine + 4 H(+). Specifically dimethylates two adjacent adenosines (A1518 and A1519) in the loop of a conserved hairpin near the 3'-end of 16S rRNA in the 30S particle. May play a critical role in biogenesis of 30S subunits. This is Ribosomal RNA small subunit methyltransferase A from Cronobacter sakazakii (strain ATCC BAA-894) (Enterobacter sakazakii).